The following is a 340-amino-acid chain: Ketol-acid reductoisomerase (NADP(+)) (340 aa).

Positions 1–182 (MTVTMQYEKD…GSARVGLLET (182 aa)) constitute a KARI N-terminal Rossmann domain. NADP(+) is bound by residues 26–29 (YGSQ), R49, S53, and 83–86 (DEIQ). The active site involves H108. Residue G134 coordinates NADP(+). Residues 183–328 (TFKEETEEDL…AELRKAMPFV (146 aa)) enclose the KARI C-terminal knotted domain. Positions 191, 195, 227, and 231 each coordinate Mg(2+). S252 contacts substrate.

The protein belongs to the ketol-acid reductoisomerase family. The cofactor is Mg(2+).

The catalysed reaction is (2R)-2,3-dihydroxy-3-methylbutanoate + NADP(+) = (2S)-2-acetolactate + NADPH + H(+). The enzyme catalyses (2R,3R)-2,3-dihydroxy-3-methylpentanoate + NADP(+) = (S)-2-ethyl-2-hydroxy-3-oxobutanoate + NADPH + H(+). It participates in amino-acid biosynthesis; L-isoleucine biosynthesis; L-isoleucine from 2-oxobutanoate: step 2/4. It functions in the pathway amino-acid biosynthesis; L-valine biosynthesis; L-valine from pyruvate: step 2/4. In terms of biological role, involved in the biosynthesis of branched-chain amino acids (BCAA). Catalyzes an alkyl-migration followed by a ketol-acid reduction of (S)-2-acetolactate (S2AL) to yield (R)-2,3-dihydroxy-isovalerate. In the isomerase reaction, S2AL is rearranged via a Mg-dependent methyl migration to produce 3-hydroxy-3-methyl-2-ketobutyrate (HMKB). In the reductase reaction, this 2-ketoacid undergoes a metal-dependent reduction by NADPH to yield (R)-2,3-dihydroxy-isovalerate. The sequence is that of Ketol-acid reductoisomerase (NADP(+)) from Streptococcus suis (strain 98HAH33).